The sequence spans 347 residues: Cell division protein FtsQ (347 aa).

The interval 1 to 55 (MARNGNPQFPDERSTATRAKATEPEELDDRFSDLEPEEDSPFLRSQKRVPVRRGP) is disordered. The Cytoplasmic segment spans residues 1-66 (MARNGNPQFP…PSKKAANRVK (66 aa)). A compositionally biased stretch (basic and acidic residues) spans 10-33 (PDERSTATRAKATEPEELDDRFSD). Residues 67 to 87 (IALIVLGVLVVIGGVWMALSA) traverse the membrane as a helical segment. The Periplasmic segment spans residues 88 to 347 (YGEHSWRFRL…PTAHTSGRRH (260 aa)). One can recognise a POTRA domain in the interval 98–166 (ESSDSIEVGG…DRIRVQVTER (69 aa)). The interval 308 to 347 (DSHPSAAKPTAPAVAPAVEKPAVAKPAVAKPTAHTSGRRH) is disordered. The segment covering 313–340 (AAKPTAPAVAPAVEKPAVAKPAVAKPTA) has biased composition (low complexity).

Belongs to the FtsQ/DivIB family. FtsQ subfamily.

The protein localises to the cell inner membrane. Essential cell division protein. The polypeptide is Cell division protein FtsQ (Koribacter versatilis (strain Ellin345)).